The sequence spans 159 residues: Small ribosomal subunit protein bS6 (159 aa).

Basic and acidic residues predominate over residues 93–151 (VDEHEEGPSAMMRKADRDRERDDRGPREGGFRGDREGRGDREGGGFRGDRGPRRPREDA). Residues 93–159 (VDEHEEGPSA…DADTAAASEE (67 aa)) are disordered.

This sequence belongs to the bacterial ribosomal protein bS6 family.

Binds together with bS18 to 16S ribosomal RNA. The polypeptide is Small ribosomal subunit protein bS6 (Rhodopseudomonas palustris (strain HaA2)).